Consider the following 129-residue polypeptide: Small ribosomal subunit protein uS11 (129 aa).

It belongs to the universal ribosomal protein uS11 family. In terms of assembly, part of the 30S ribosomal subunit. Interacts with proteins S7 and S18. Binds to IF-3.

Its function is as follows. Located on the platform of the 30S subunit, it bridges several disparate RNA helices of the 16S rRNA. Forms part of the Shine-Dalgarno cleft in the 70S ribosome. In Paracoccus denitrificans (strain Pd 1222), this protein is Small ribosomal subunit protein uS11.